The sequence spans 78 residues: Large ribosomal subunit protein bL28 (78 aa).

Positions 1 to 23 (MSRVCQVSGKRVQTGNNVSHANN) are disordered. Polar residues predominate over residues 11–22 (RVQTGNNVSHAN).

This sequence belongs to the bacterial ribosomal protein bL28 family.

The chain is Large ribosomal subunit protein bL28 from Xanthomonas campestris pv. campestris (strain 8004).